The sequence spans 407 residues: MTGRVCVLVMDSFGIGASLDAARYGDAGANTLVHIYEACKRGECDIEGVRKGPLMLPNLAGKGLYHAAMASSGLSFIDLATLAIPSGYYGYAVEQSLGKDTPSGHWEMAGVPVTFEWGYFPDKPYCFPEELISEFIKQCNLPGVLGEKHASGTIIIDELGEKHIRTGKPIVYTSADSVFQIAAHEEAFGLQRLYDICKIARNLVDKYQIGRVIARPFTGKPGSFKRTGNRKDYATPPPEKTLLDFLKEDGREVIAIGKIADIYAHQGVTQEIKADGNMALFDATLSAMKTAPQGSLVFTNFVDFDSSYGHRRDIAGYAHALEQFDARLPELDALLQPDDMVFIAADHGCDPTFPGSDHTREHIPVLVFGPQVNSKFIGRRDCFADIGQSIAEHLQLSSPLAHGVSFL.

Mn(2+)-binding residues include aspartate 11, aspartate 305, histidine 310, aspartate 346, histidine 347, and histidine 358.

Belongs to the phosphopentomutase family. Requires Mn(2+) as cofactor.

It localises to the cytoplasm. It carries out the reaction 2-deoxy-alpha-D-ribose 1-phosphate = 2-deoxy-D-ribose 5-phosphate. The catalysed reaction is alpha-D-ribose 1-phosphate = D-ribose 5-phosphate. It participates in carbohydrate degradation; 2-deoxy-D-ribose 1-phosphate degradation; D-glyceraldehyde 3-phosphate and acetaldehyde from 2-deoxy-alpha-D-ribose 1-phosphate: step 1/2. Its function is as follows. Isomerase that catalyzes the conversion of deoxy-ribose 1-phosphate (dRib-1-P) and ribose 1-phosphate (Rib-1-P) to deoxy-ribose 5-phosphate (dRib-5-P) and ribose 5-phosphate (Rib-5-P), respectively. This chain is Phosphopentomutase, found in Legionella pneumophila subsp. pneumophila (strain Philadelphia 1 / ATCC 33152 / DSM 7513).